The primary structure comprises 259 residues: Probable ABC transporter permease protein RT0041 (259 aa).

5 helical membrane-spanning segments follow: residues V20–Y40, L49–V69, V148–M168, L195–I215, and A237–F257.

The protein belongs to the MlaE permease family.

It localises to the cell inner membrane. Could be part of an ABC transporter complex. The chain is Probable ABC transporter permease protein RT0041 from Rickettsia typhi (strain ATCC VR-144 / Wilmington).